The primary structure comprises 216 residues: Guanylate kinase (216 aa).

The region spanning glycine 15 to histidine 193 is the Guanylate kinase-like domain. An ATP-binding site is contributed by alanine 22–serine 29.

It belongs to the guanylate kinase family.

It localises to the cytoplasm. The enzyme catalyses GMP + ATP = GDP + ADP. In terms of biological role, essential for recycling GMP and indirectly, cGMP. The polypeptide is Guanylate kinase (Cupriavidus metallidurans (strain ATCC 43123 / DSM 2839 / NBRC 102507 / CH34) (Ralstonia metallidurans)).